Reading from the N-terminus, the 501-residue chain is HMG-box protein STE11 (501 aa).

The span at Pro142–Pro153 shows a compositional bias: polar residues. 2 disordered regions span residues Pro142–Leu205 and Tyr246–Gln293. Residues Ser192–Pro204 are compositionally biased toward low complexity. Residues Ile201–Lys265 constitute a DNA-binding region (HMG box). Positions Tyr246–Asp263 are enriched in basic and acidic residues.

In terms of processing, phosphorylated by MAPK2.

The protein resides in the nucleus. The polypeptide is HMG-box protein STE11 (Pneumocystis carinii).